We begin with the raw amino-acid sequence, 316 residues long: Mitochondrial distribution and morphology protein 12 (316 aa).

The region spanning 1-312 (MSIDLEWNGL…FPNFHTLVLG (312 aa)) is the SMP-LTD domain.

Belongs to the MDM12 family. Component of the ER-mitochondria encounter structure (ERMES) or MDM complex, composed of MMM1, MDM10, MDM12 and MDM34. An MMM1 homodimer associates with one molecule of MDM12 on each side in a pairwise head-to-tail manner, and the SMP-LTD domains of MMM1 and MDM12 generate a continuous hydrophobic tunnel for phospholipid trafficking.

The protein resides in the mitochondrion outer membrane. It is found in the endoplasmic reticulum membrane. Functionally, component of the ERMES/MDM complex, which serves as a molecular tether to connect the endoplasmic reticulum (ER) and mitochondria. Components of this complex are involved in the control of mitochondrial shape and protein biogenesis, and function in nonvesicular lipid trafficking between the ER and mitochondria. MDM12 is required for the interaction of the ER-resident membrane protein MMM1 and the outer mitochondrial membrane-resident beta-barrel protein MDM10. The MDM12-MMM1 subcomplex functions in the major beta-barrel assembly pathway that is responsible for biogenesis of all mitochondrial outer membrane beta-barrel proteins, and acts in a late step after the SAM complex. The MDM10-MDM12-MMM1 subcomplex further acts in the TOM40-specific pathway after the action of the MDM12-MMM1 complex. Essential for establishing and maintaining the structure of mitochondria and maintenance of mtDNA nucleoids. This Postia placenta (strain ATCC 44394 / Madison 698-R) (Brown rot fungus) protein is Mitochondrial distribution and morphology protein 12.